Here is a 188-residue protein sequence, read N- to C-terminus: MKISANSIRTGNILVYNNDLWVVSKTPEHTQPGKGGAYVQVEMKNLKTGTKRNDRFSSSDYLEKAELEQKDCQFLYFEGNNLVLMDTKHFDQINVPKEILEAKLPFLTENMIVKVEFYNDKPLTIVLPPTVILAISETDPVIKGATVTSSYKPAILENGIKVKVPQYLAIGEKIVVKTDDMTYVERAK.

The protein belongs to the elongation factor P family.

It localises to the cytoplasm. The protein operates within protein biosynthesis; polypeptide chain elongation. In terms of biological role, involved in peptide bond synthesis. Stimulates efficient translation and peptide-bond synthesis on native or reconstituted 70S ribosomes in vitro. Probably functions indirectly by altering the affinity of the ribosome for aminoacyl-tRNA, thus increasing their reactivity as acceptors for peptidyl transferase. This chain is Elongation factor P (efp), found in Rickettsia prowazekii (strain Madrid E).